The chain runs to 344 residues: UDP-3-O-acylglucosamine N-acyltransferase (344 aa).

The active-site Proton acceptor is His-236.

It belongs to the transferase hexapeptide repeat family. LpxD subfamily. Homotrimer.

It catalyses the reaction a UDP-3-O-[(3R)-3-hydroxyacyl]-alpha-D-glucosamine + a (3R)-hydroxyacyl-[ACP] = a UDP-2-N,3-O-bis[(3R)-3-hydroxyacyl]-alpha-D-glucosamine + holo-[ACP] + H(+). It participates in bacterial outer membrane biogenesis; LPS lipid A biosynthesis. Catalyzes the N-acylation of UDP-3-O-acylglucosamine using 3-hydroxyacyl-ACP as the acyl donor. Is involved in the biosynthesis of lipid A, a phosphorylated glycolipid that anchors the lipopolysaccharide to the outer membrane of the cell. The polypeptide is UDP-3-O-acylglucosamine N-acyltransferase (Nitratidesulfovibrio vulgaris (strain ATCC 29579 / DSM 644 / CCUG 34227 / NCIMB 8303 / VKM B-1760 / Hildenborough) (Desulfovibrio vulgaris)).